The sequence spans 282 residues: Pantothenate synthetase (282 aa).

32–39 (MGALHEGH) serves as a coordination point for ATP. The active-site Proton donor is His-39. Gln-63 lines the (R)-pantoate pocket. Gln-63 provides a ligand contact to beta-alanine. 149–152 (GEKD) lines the ATP pocket. Gln-155 serves as a coordination point for (R)-pantoate. ATP contacts are provided by residues Val-178 and 186-189 (LSSR).

It belongs to the pantothenate synthetase family. As to quaternary structure, homodimer.

It is found in the cytoplasm. The catalysed reaction is (R)-pantoate + beta-alanine + ATP = (R)-pantothenate + AMP + diphosphate + H(+). The protein operates within cofactor biosynthesis; (R)-pantothenate biosynthesis; (R)-pantothenate from (R)-pantoate and beta-alanine: step 1/1. In terms of biological role, catalyzes the condensation of pantoate with beta-alanine in an ATP-dependent reaction via a pantoyl-adenylate intermediate. This is Pantothenate synthetase from Paracoccus denitrificans (strain Pd 1222).